The chain runs to 473 residues: Ribonuclease Y (473 aa).

A helical transmembrane segment spans residues 4 to 24; sequence LIAFIILLILFVLLITIVPVV. The region spanning 158 to 218 is the KH domain; the sequence is SLFNIDIIDE…IRREIARIVM (61 aa). The HD domain occupies 285-378; the sequence is ILSHSLEVAE…VKIVDTLSAA (94 aa).

This sequence belongs to the RNase Y family.

It localises to the cell membrane. Its function is as follows. Endoribonuclease that initiates mRNA decay. The protein is Ribonuclease Y of Ureaplasma parvum serovar 3 (strain ATCC 27815 / 27 / NCTC 11736).